We begin with the raw amino-acid sequence, 401 residues long: MSVKIIVPSLGESVTEATIAKWYKKEGDPVKTDELLLEIETEKVTLEVNAPCDGTIGKISKTDGANVAVGEEIGEINEGAAANTAGTNNESAKAQAVTQPTSEKPVEKPAVVNNILAPSVQKLVTENKLDPNNIKGTGRDGRITKGDVLETINTPSAATSTPTVNKTNEERVQRVRMSRLRKTIAQRLKDSQNTAAILTTFNEIDMSKVIALRNQYKEEFEKKHLVKLGFMSFFVKATIEALKLIPSVNAEIDGDDLVYKNYYDIGVAVGTEQGLVVPVVRDADKMGFAEVEKAIGTLAKKAREGKLSMADLSGGTFSISNGGVYGSLLSTPIINPPQSGILGLHKTEERAVVIDGKIEIRPMMYIALSYDHRIIDGKEGVSFLVKIKELIENPEKLLLNL.

The 76-residue stretch at 2–77 (SVKIIVPSLG…AVGEEIGEIN (76 aa)) folds into the Lipoyl-binding domain. Lysine 43 carries the post-translational modification N6-lipoyllysine. One can recognise a Peripheral subunit-binding (PSBD) domain in the interval 115–152 (ILAPSVQKLVTENKLDPNNIKGTGRDGRITKGDVLETI). Residues histidine 372 and aspartate 376 contribute to the active site.

This sequence belongs to the 2-oxoacid dehydrogenase family. In terms of assembly, forms a 24-polypeptide structural core with octahedral symmetry. Part of the 2-oxoglutarate dehydrogenase (OGDH) complex composed of E1 (2-oxoglutarate dehydrogenase), E2 (dihydrolipoamide succinyltransferase) and E3 (dihydrolipoamide dehydrogenase); the complex contains multiple copies of the three enzymatic components (E1, E2 and E3). (R)-lipoate serves as cofactor.

It catalyses the reaction N(6)-[(R)-dihydrolipoyl]-L-lysyl-[protein] + succinyl-CoA = N(6)-[(R)-S(8)-succinyldihydrolipoyl]-L-lysyl-[protein] + CoA. The protein operates within amino-acid degradation; L-lysine degradation via saccharopine pathway; glutaryl-CoA from L-lysine: step 6/6. Functionally, E2 component of the 2-oxoglutarate dehydrogenase (OGDH) complex which catalyzes the second step in the conversion of 2-oxoglutarate to succinyl-CoA and CO(2). This chain is Dihydrolipoyllysine-residue succinyltransferase component of 2-oxoglutarate dehydrogenase complex (sucB), found in Rickettsia felis (strain ATCC VR-1525 / URRWXCal2) (Rickettsia azadi).